A 213-amino-acid polypeptide reads, in one-letter code: 3,4-dihydroxy-2-butanone 4-phosphate synthase (213 aa).

D-ribulose 5-phosphate-binding positions include Arg37–Glu38, Asp42, Arg150–Thr154, and Glu174. Position 38 (Glu38) interacts with Mg(2+). His153 provides a ligand contact to Mg(2+).

This sequence belongs to the DHBP synthase family. As to quaternary structure, homodimer. It depends on Mg(2+) as a cofactor. The cofactor is Mn(2+).

It catalyses the reaction D-ribulose 5-phosphate = (2S)-2-hydroxy-3-oxobutyl phosphate + formate + H(+). It participates in cofactor biosynthesis; riboflavin biosynthesis; 2-hydroxy-3-oxobutyl phosphate from D-ribulose 5-phosphate: step 1/1. Functionally, catalyzes the conversion of D-ribulose 5-phosphate to formate and 3,4-dihydroxy-2-butanone 4-phosphate. The protein is 3,4-dihydroxy-2-butanone 4-phosphate synthase of Clostridium botulinum (strain Langeland / NCTC 10281 / Type F).